The sequence spans 42 residues: uncharacterized protein (42 aa).

The helical transmembrane segment at 15 to 37 (PLILAVDCAIIIPNTNFIHSFLI) threads the bilayer.

The protein resides in the membrane. This is an uncharacterized protein from Dictyostelium discoideum (Social amoeba).